The sequence spans 152 residues: Deoxyuridine 5'-triphosphate nucleotidohydrolase (152 aa).

Substrate is bound by residues 71-73 (RSG), asparagine 84, 88-90 (LID), and lysine 98.

Belongs to the dUTPase family. Requires Mg(2+) as cofactor.

The enzyme catalyses dUTP + H2O = dUMP + diphosphate + H(+). It participates in pyrimidine metabolism; dUMP biosynthesis; dUMP from dCTP (dUTP route): step 2/2. Functionally, this enzyme is involved in nucleotide metabolism: it produces dUMP, the immediate precursor of thymidine nucleotides and it decreases the intracellular concentration of dUTP so that uracil cannot be incorporated into DNA. This chain is Deoxyuridine 5'-triphosphate nucleotidohydrolase, found in Legionella pneumophila (strain Paris).